Reading from the N-terminus, the 219-residue chain is 2-hydroxy-3-keto-5-methylthiopentenyl-1-phosphate phosphatase (219 aa).

The protein belongs to the HAD-like hydrolase superfamily. MtnX family.

It catalyses the reaction 2-hydroxy-5-methylsulfanyl-3-oxopent-1-enyl phosphate + H2O = 1,2-dihydroxy-5-(methylsulfanyl)pent-1-en-3-one + phosphate. Its pathway is amino-acid biosynthesis; L-methionine biosynthesis via salvage pathway; L-methionine from S-methyl-5-thio-alpha-D-ribose 1-phosphate: step 4/6. Its function is as follows. Dephosphorylates 2-hydroxy-3-keto-5-methylthiopentenyl-1-phosphate (HK-MTPenyl-1-P) yielding 1,2-dihydroxy-3-keto-5-methylthiopentene (DHK-MTPene). This Bacillus thuringiensis subsp. konkukian (strain 97-27) protein is 2-hydroxy-3-keto-5-methylthiopentenyl-1-phosphate phosphatase.